The following is a 196-amino-acid chain: Small ribosomal subunit protein uS4c (196 aa).

The segment at 15 to 43 is disordered; sequence LGALPGLTRKTPKSGSNQKKKFHSGKKEQ. The 62-residue stretch at 89–150 folds into the S4 RNA-binding domain; the sequence is MRLDNILFRL…NQRSKRLVQN (62 aa).

It belongs to the universal ribosomal protein uS4 family. In terms of assembly, part of the 30S ribosomal subunit. Contacts protein S5. The interaction surface between S4 and S5 is involved in control of translational fidelity.

It is found in the plastid. The protein localises to the chloroplast. One of the primary rRNA binding proteins, it binds directly to 16S rRNA where it nucleates assembly of the body of the 30S subunit. Its function is as follows. With S5 and S12 plays an important role in translational accuracy. The protein is Small ribosomal subunit protein uS4c (rps4) of Melinis repens (Red Natal grass).